A 461-amino-acid polypeptide reads, in one-letter code: MDYFPIFCQLRTKPCLLVGGGEVAERKARLLMEAGAILTVNAGRFTPQFEQWQRDGQLTLIAGDFDPALLTGKWLAIAATDDSRVNQQVLAQSEARCIFCNVVDAAQQTGFIMPSIVDRSPLMVAVSSGGSAPVLARILREKLEALLPQHLGQVAHMAGHLRQRVKAHFPTLSLRRRFWERLFAQDRLAQSLANGDTTQAQQQVDALFSAAPMDRGEVTLVGAGPGDAGLLTLKGLQQIQQADVIIYDRLVSDEVMSLVRRDATRIFVGKHAGHHCVPQEEINQTLLDHAREGKRVVRLKGGDPFIFGRGGEELEALAAAGIAFSVVPGITAASGCSAYSGIPLTHRDHAQSVRLVTGHTRQDGQLDWSCLAAAGQTLVFYMGLSQAATIQQRLLQHGMLPDTPIALVENGTTIRQRVVSGTLTQLETLATRVASPSLIIVGDVVTLRPRLNWFRCEAASA.

Positions 1-204 are precorrin-2 dehydrogenase /sirohydrochlorin ferrochelatase; the sequence is MDYFPIFCQL…GDTTQAQQQV (204 aa). NAD(+) is bound by residues 22-23 and 43-44; these read EV and GR. Phosphoserine is present on S128. Positions 216–461 are uroporphyrinogen-III C-methyltransferase; the sequence is GEVTLVGAGP…NWFRCEAASA (246 aa). An S-adenosyl-L-methionine-binding site is contributed by P225. D248 functions as the Proton acceptor in the catalytic mechanism. The active-site Proton donor is K270. S-adenosyl-L-methionine-binding positions include 301 to 303, I306, 331 to 332, M382, and G411; these read GGD and TA.

It in the N-terminal section; belongs to the precorrin-2 dehydrogenase / sirohydrochlorin ferrochelatase family. In the C-terminal section; belongs to the precorrin methyltransferase family.

The enzyme catalyses uroporphyrinogen III + 2 S-adenosyl-L-methionine = precorrin-2 + 2 S-adenosyl-L-homocysteine + H(+). It carries out the reaction precorrin-2 + NAD(+) = sirohydrochlorin + NADH + 2 H(+). It catalyses the reaction siroheme + 2 H(+) = sirohydrochlorin + Fe(2+). It participates in cofactor biosynthesis; adenosylcobalamin biosynthesis; precorrin-2 from uroporphyrinogen III: step 1/1. The protein operates within cofactor biosynthesis; adenosylcobalamin biosynthesis; sirohydrochlorin from precorrin-2: step 1/1. Its pathway is porphyrin-containing compound metabolism; siroheme biosynthesis; precorrin-2 from uroporphyrinogen III: step 1/1. It functions in the pathway porphyrin-containing compound metabolism; siroheme biosynthesis; siroheme from sirohydrochlorin: step 1/1. It participates in porphyrin-containing compound metabolism; siroheme biosynthesis; sirohydrochlorin from precorrin-2: step 1/1. Its function is as follows. Multifunctional enzyme that catalyzes the SAM-dependent methylations of uroporphyrinogen III at position C-2 and C-7 to form precorrin-2 via precorrin-1. Then it catalyzes the NAD-dependent ring dehydrogenation of precorrin-2 to yield sirohydrochlorin. Finally, it catalyzes the ferrochelation of sirohydrochlorin to yield siroheme. The sequence is that of Siroheme synthase from Edwardsiella ictaluri (strain 93-146).